The following is a 114-amino-acid chain: Phosphoribosyl-AMP cyclohydrolase (114 aa).

Asp80 serves as a coordination point for Mg(2+). Residue Cys81 participates in Zn(2+) binding. 2 residues coordinate Mg(2+): Asp82 and Asp84. Residues Cys97 and Cys104 each coordinate Zn(2+).

The protein belongs to the PRA-CH family. As to quaternary structure, homodimer. It depends on Mg(2+) as a cofactor. Zn(2+) is required as a cofactor.

It is found in the cytoplasm. It carries out the reaction 1-(5-phospho-beta-D-ribosyl)-5'-AMP + H2O = 1-(5-phospho-beta-D-ribosyl)-5-[(5-phospho-beta-D-ribosylamino)methylideneamino]imidazole-4-carboxamide. It functions in the pathway amino-acid biosynthesis; L-histidine biosynthesis; L-histidine from 5-phospho-alpha-D-ribose 1-diphosphate: step 3/9. Functionally, catalyzes the hydrolysis of the adenine ring of phosphoribosyl-AMP. The polypeptide is Phosphoribosyl-AMP cyclohydrolase (Rhodococcus jostii (strain RHA1)).